A 261-amino-acid polypeptide reads, in one-letter code: tRNA pseudouridine synthase A (261 aa).

Asp51 (nucleophile) is an active-site residue. Tyr109 is a substrate binding site.

The protein belongs to the tRNA pseudouridine synthase TruA family. Homodimer.

The enzyme catalyses uridine(38/39/40) in tRNA = pseudouridine(38/39/40) in tRNA. In terms of biological role, formation of pseudouridine at positions 38, 39 and 40 in the anticodon stem and loop of transfer RNAs. In Idiomarina loihiensis (strain ATCC BAA-735 / DSM 15497 / L2-TR), this protein is tRNA pseudouridine synthase A.